The following is a 253-amino-acid chain: uncharacterized protein (253 aa).

Residues 211 to 241 (TTRRKRYREDRDSGEDLGAESKRGNGSVRYT) form a disordered region.

This is an uncharacterized protein from Ictalurid herpesvirus 1 (strain Auburn) (IcHV-1).